Here is a 411-residue protein sequence, read N- to C-terminus: Citrate synthase (411 aa).

Active-site residues include histidine 304 and aspartate 363.

Belongs to the citrate synthase family.

It catalyses the reaction oxaloacetate + acetyl-CoA + H2O = citrate + CoA + H(+). It participates in carbohydrate metabolism; tricarboxylic acid cycle; isocitrate from oxaloacetate: step 1/2. This chain is Citrate synthase (gltA), found in Rickettsia canadensis.